The sequence spans 239 residues: Leucine rich adaptor protein 1 (239 aa).

2 LRR repeats span residues 55-83 (LGDK…LVTL) and 93-114 (LLEE…QYSL). Over residues 107 to 116 (LTSSQYSLTG) the composition is skewed to low complexity. Disordered stretches follow at residues 107–139 (LTSS…TDRL) and 200–219 (KPPG…DESA). Residues Ser118, Ser126, Ser129, and Ser213 each carry the phosphoserine modification.

In terms of assembly, forms a tripartite complex with CDC42BPA/CDC42BPB and MYO18A acting as an adapter connecting both. Its binding to CDC42BPA/CDC42BPB results in their activation by abolition of their negative autoregulation. Interacts with CDC42BPA and CDC42BPB.

The protein resides in the cytoplasm. Functionally, acts as an activator of the canonical NF-kappa-B pathway and drive the production of pro-inflammatory cytokines. Promotes the antigen (Ag)-presenting and priming function of dendritic cells via the canonical NF-kappa-B pathway. In concert with MYO18A and CDC42BPA/CDC42BPB, is involved in modulating lamellar actomyosin retrograde flow that is crucial to cell protrusion and migration. Activates CDC42BPA/CDC42BPB and targets it to actomyosin through its interaction with MYO18A, leading to MYL9/MLC2 phosphorylation and MYH9/MYH10-dependent actomyosin assembly in the lamella. This Homo sapiens (Human) protein is Leucine rich adaptor protein 1 (LURAP1).